Reading from the N-terminus, the 351-residue chain is MKKQLDQLTAYTPGLSPESLKKQYGIRGELHKLASNENVYGPSPKVKTAIQSHLDELYYYPESGSPKLREAISQQLNVDASRILFGAGLDEVILMISRAVLSPGDKIITSESTFGQYYHNAIVESADVIQVPLKDGGFDLDGMLQQIDNKTSLIWLCNPNNPTGTYFSHDELFNFLKRVPSDIPVLIDEAYVEFVTADDFPDTLKLQEDFDNAFLLRTFSKAYGLAGLRVGYVIASEDAIEKWNIIRPPFNVTRISEYAAIAALEDQEYLKEVTQKNSFERDKFYQIPQSQHFLPSQANFVFVKTSRSQALYDALLNVGCITRLFPNGVRITIGLPEQNNKMIEVLKHFEY.

K221 bears the N6-(pyridoxal phosphate)lysine mark.

Belongs to the class-II pyridoxal-phosphate-dependent aminotransferase family. Histidinol-phosphate aminotransferase subfamily. Homodimer. Requires pyridoxal 5'-phosphate as cofactor.

It carries out the reaction L-histidinol phosphate + 2-oxoglutarate = 3-(imidazol-4-yl)-2-oxopropyl phosphate + L-glutamate. The protein operates within amino-acid biosynthesis; L-histidine biosynthesis; L-histidine from 5-phospho-alpha-D-ribose 1-diphosphate: step 7/9. The sequence is that of Histidinol-phosphate aminotransferase from Staphylococcus epidermidis (strain ATCC 12228 / FDA PCI 1200).